The following is a 165-amino-acid chain: Ubiquitin-fold modifier-conjugating enzyme 1 (165 aa).

Cysteine 116 serves as the catalytic Glycyl thioester intermediate.

This sequence belongs to the ubiquitin-conjugating enzyme family. UFC1 subfamily.

In terms of biological role, E2-like enzyme which forms an intermediate with UFM1 via a thioester linkage. In Drosophila virilis (Fruit fly), this protein is Ubiquitin-fold modifier-conjugating enzyme 1.